We begin with the raw amino-acid sequence, 181 residues long: Acireductone dioxygenase 2 (181 aa).

Positions 97, 99, 103, and 141 each coordinate Fe(2+). The Ni(2+) site is built by His97, His99, Glu103, and His141.

This sequence belongs to the acireductone dioxygenase (ARD) family. As to quaternary structure, monomer. Fe(2+) is required as a cofactor. It depends on Ni(2+) as a cofactor.

It catalyses the reaction 1,2-dihydroxy-5-(methylsulfanyl)pent-1-en-3-one + O2 = 3-(methylsulfanyl)propanoate + CO + formate + 2 H(+). It carries out the reaction 1,2-dihydroxy-5-(methylsulfanyl)pent-1-en-3-one + O2 = 4-methylsulfanyl-2-oxobutanoate + formate + 2 H(+). It participates in amino-acid biosynthesis; L-methionine biosynthesis via salvage pathway; L-methionine from S-methyl-5-thio-alpha-D-ribose 1-phosphate: step 5/6. Its function is as follows. Catalyzes 2 different reactions between oxygen and the acireductone 1,2-dihydroxy-3-keto-5-methylthiopentene (DHK-MTPene) depending upon the metal bound in the active site. Fe-containing acireductone dioxygenase (Fe-ARD) produces formate and 2-keto-4-methylthiobutyrate (KMTB), the alpha-ketoacid precursor of methionine in the methionine recycle pathway. Ni-containing acireductone dioxygenase (Ni-ARD) produces methylthiopropionate, carbon monoxide and formate, and does not lie on the methionine recycle pathway. The sequence is that of Acireductone dioxygenase 2 from Pectobacterium atrosepticum (strain SCRI 1043 / ATCC BAA-672) (Erwinia carotovora subsp. atroseptica).